The primary structure comprises 172 residues: Endoribonuclease YbeY (172 aa).

Residues His136, His140, and His146 each coordinate Zn(2+).

The protein belongs to the endoribonuclease YbeY family. Requires Zn(2+) as cofactor.

It is found in the cytoplasm. In terms of biological role, single strand-specific metallo-endoribonuclease involved in late-stage 70S ribosome quality control and in maturation of the 3' terminus of the 16S rRNA. The sequence is that of Endoribonuclease YbeY from Rickettsia canadensis (strain McKiel).